Consider the following 489-residue polypeptide: 3-octaprenyl-4-hydroxybenzoate carboxy-lyase (489 aa).

N172 contacts Mn(2+). Residues 175-177, 189-191, and 194-195 contribute to the prenylated FMN site; these read IYR, RWL, and RG. Mn(2+) is bound at residue E238. The active-site Proton donor is the D287.

Belongs to the UbiD family. In terms of assembly, homohexamer. It depends on prenylated FMN as a cofactor. Mn(2+) serves as cofactor.

The protein resides in the cell membrane. It carries out the reaction a 4-hydroxy-3-(all-trans-polyprenyl)benzoate + H(+) = a 2-(all-trans-polyprenyl)phenol + CO2. The protein operates within cofactor biosynthesis; ubiquinone biosynthesis. In terms of biological role, catalyzes the decarboxylation of 3-octaprenyl-4-hydroxy benzoate to 2-octaprenylphenol, an intermediate step in ubiquinone biosynthesis. The chain is 3-octaprenyl-4-hydroxybenzoate carboxy-lyase from Glaesserella parasuis serovar 5 (strain SH0165) (Haemophilus parasuis).